The primary structure comprises 137 residues: Small ribosomal subunit protein bS16m (137 aa).

A mitochondrion-targeting transit peptide spans 1-34 (MVHLTTLLCKAYRGGHLTIRLALGGCTNRPFYRI). Thr-130 bears the Phosphothreonine mark.

This sequence belongs to the bacterial ribosomal protein bS16 family. Component of the mitochondrial small ribosomal subunit (mt-SSU). Mature mammalian 55S mitochondrial ribosomes consist of a small (28S) and a large (39S) subunit. The 28S small subunit contains a 12S ribosomal RNA (12S mt-rRNA) and 30 different proteins. The 39S large subunit contains a 16S rRNA (16S mt-rRNA), a copy of mitochondrial valine transfer RNA (mt-tRNA(Val)), which plays an integral structural role, and 52 different proteins. bS16m has a zinc binding site.

It is found in the mitochondrion. The chain is Small ribosomal subunit protein bS16m (MRPS16) from Homo sapiens (Human).